The chain runs to 710 residues: Polyribonucleotide nucleotidyltransferase (710 aa).

The Mg(2+) site is built by Asp-489 and Asp-495. Residues 556 to 615 (PKIDTIKIDVDKIKVVIGKGGETIDKIIAETGVKIDIDDEGNVSIYSSDQAAINRTKEII) form the KH domain. The 69-residue stretch at 625–693 (GEVYHAKVVR…EKGRVDASMK (69 aa)) folds into the S1 motif domain. The tract at residues 691-710 (SMKALIPRPPKPEKKEEKHD) is disordered. The segment covering 700–710 (PKPEKKEEKHD) has biased composition (basic and acidic residues).

It belongs to the polyribonucleotide nucleotidyltransferase family. The cofactor is Mg(2+).

It is found in the cytoplasm. The catalysed reaction is RNA(n+1) + phosphate = RNA(n) + a ribonucleoside 5'-diphosphate. Functionally, involved in mRNA degradation. Catalyzes the phosphorolysis of single-stranded polyribonucleotides processively in the 3'- to 5'-direction. The protein is Polyribonucleotide nucleotidyltransferase of Streptococcus pyogenes serotype M2 (strain MGAS10270).